A 400-amino-acid polypeptide reads, in one-letter code: Deoxyhypusine synthase-like protein (400 aa).

Residues 372–400 (KLGKEQMPEPQSTEPVATYPCGTPIKGRK) are disordered.

The protein belongs to the deoxyhypusine synthase family.

This is Deoxyhypusine synthase-like protein from Cyanothece sp. (strain PCC 7425 / ATCC 29141).